Reading from the N-terminus, the 521-residue chain is 2-isopropylmalate synthase (521 aa).

The region spanning 12 to 274 (VIIFDTTLRD…WNKIDTTMLT (263 aa)) is the Pyruvate carboxyltransferase domain. 4 residues coordinate Mn(2+): D21, H209, H211, and N245. Residues 398 to 521 (KLVSLTVIAG…DMAAPAAAAS (124 aa)) are regulatory domain.

The protein belongs to the alpha-IPM synthase/homocitrate synthase family. LeuA type 1 subfamily. Homodimer. Requires Mn(2+) as cofactor.

The protein localises to the cytoplasm. The catalysed reaction is 3-methyl-2-oxobutanoate + acetyl-CoA + H2O = (2S)-2-isopropylmalate + CoA + H(+). Its pathway is amino-acid biosynthesis; L-leucine biosynthesis; L-leucine from 3-methyl-2-oxobutanoate: step 1/4. Functionally, catalyzes the condensation of the acetyl group of acetyl-CoA with 3-methyl-2-oxobutanoate (2-ketoisovalerate) to form 3-carboxy-3-hydroxy-4-methylpentanoate (2-isopropylmalate). The sequence is that of 2-isopropylmalate synthase from Rhodopseudomonas palustris (strain BisA53).